We begin with the raw amino-acid sequence, 168 residues long: Nascent polypeptide-associated complex subunit alpha (168 aa).

One can recognise an NAC-A/B domain in the interval 14 to 78 (SKNEKKAREL…PKVDDFTRRL (65 aa)). Residues 83 to 129 (QQAASAAKDPQSIQADMAAAAAAPAAPAAPAAAPEEDEAGQVDESGL) are disordered. The segment covering 100 to 115 (AAAAAAPAAPAAPAAA) has biased composition (low complexity). The UBA domain occupies 129–168 (LDGQDIELVMQQANVSRNKAVKALREHNSDIVNAIMSLSK).

This sequence belongs to the NAC-alpha family. As to quaternary structure, part of the nascent polypeptide-associated complex (NAC), consisting of EGD2 and EGD1. NAC associates with ribosomes via EGD1.

The protein resides in the cytoplasm. It is found in the nucleus. Component of the nascent polypeptide-associated complex (NAC), a dynamic component of the ribosomal exit tunnel, protecting the emerging polypeptides from interaction with other cytoplasmic proteins to ensure appropriate nascent protein targeting. The NAC complex also promotes mitochondrial protein import by enhancing productive ribosome interactions with the outer mitochondrial membrane and blocks the inappropriate interaction of ribosomes translating non-secretory nascent polypeptides with translocation sites in the membrane of the endoplasmic reticulum. EGD2 may also be involved in transcription regulation. The sequence is that of Nascent polypeptide-associated complex subunit alpha (EGD2) from Eremothecium gossypii (strain ATCC 10895 / CBS 109.51 / FGSC 9923 / NRRL Y-1056) (Yeast).